The following is a 101-amino-acid chain: uncharacterized protein (101 aa).

3 helical membrane-spanning segments follow: residues 10–32 (FLPN…FFLY), 45–67 (LGIW…LPLI), and 77–99 (IAFT…ILSH).

It localises to the cell membrane. This is an uncharacterized protein from Bacillus subtilis (strain 168).